The primary structure comprises 815 residues: uncharacterized protein (815 aa).

Residues 1–25 (MVVMKKKRILIVSAIVLLFLTVASA) form the signal peptide. A run of 6 helical transmembrane segments spans residues 127-147 (FGEA…CVRG), 157-177 (ILFI…GYYM), 311-331 (SFIA…LAFF), 333-353 (FLLQ…FILA), 372-392 (VYLL…TCFI), and 401-421 (GFGM…IGFH). A disordered region spans residues 483 to 815 (KDGSNADGVT…DRLRRDERTR (333 aa)). Positions 513-543 (HAISRTPQKETANGIANHNSRSLKRNPQTLS) are enriched in polar residues. Composition is skewed to basic and acidic residues over residues 544–563 (KEQE…ENKQ) and 599–614 (QDKK…KEYV). The span at 619–630 (KQPNNQQQTDDA) shows a compositional bias: polar residues. The segment covering 648 to 658 (ENEKDTERTDQ) has biased composition (basic and acidic residues). Polar residues predominate over residues 665-678 (EQNQNLETDQQQDF). The segment covering 696–705 (KTAEIKRSDQ) has biased composition (basic and acidic residues). Residues 720–732 (SPQSTKVENQPIA) are compositionally biased toward polar residues. Positions 734–757 (NERKIRPSEPAKVHSDGIRVDEKQ) are enriched in basic and acidic residues. The segment covering 773–793 (PSSQTIKRTEQSVNSFDQVSL) has biased composition (polar residues). Over residues 796–815 (IARRSSSKVEDRLRRDERTR) the composition is skewed to basic and acidic residues.

The protein resides in the cell membrane. This is an uncharacterized protein from Bacillus subtilis (strain 168).